Reading from the N-terminus, the 225-residue chain is FKNLNFNEQSLILQGDATVSSTGRLTNVVDNGEPRTSSLGRAFYSAPIWDKPTGRLASWREKIQEPNKAGPADGMAFALVPVGSEPKDKGAGLLGLFDEYDSNRHPVAVEFDTCYNLEHDPKERHSIRSIATPRWDFPNGENAEVLITYDEELQLLVASLVYPGERPYYLPSDRVEIEDELPEYVIPGFSATRGLNEGETHDVLSWSFASKMPDEQESEGLDLAE.

Homotetramer.

Its function is as follows. Chitin-binding lectin. Agglutinates rabbit erythrocytes, but not human erythrocytes. This Vachellia farnesiana (Sweet acacia) protein is Lectin.